A 712-amino-acid polypeptide reads, in one-letter code: UvrABC system protein B (712 aa).

Residues 35 to 421 (RRVQAGEKDV…SDGAVEQIIR (387 aa)) form the Helicase ATP-binding domain. 48 to 55 (GATGTGKS) provides a ligand contact to ATP. Positions 101-124 (YYDYYQPEAYVPQSDTYIEKDSSI) match the Beta-hairpin motif. Positions 438–604 (QIDDLVHEIR…PLRKKINDIV (167 aa)) constitute a Helicase C-terminal domain. A disordered region spans residues 625 to 655 (TKEGKGAKAPVPALGGQKTGGAKAARGRAKE). Residues 667–702 (AEQIEDLTTRMRAAAADLQFEIAARLRDEVSEMKKE) form the UVR domain.

Belongs to the UvrB family. Forms a heterotetramer with UvrA during the search for lesions. Interacts with UvrC in an incision complex.

Its subcellular location is the cytoplasm. The UvrABC repair system catalyzes the recognition and processing of DNA lesions. A damage recognition complex composed of 2 UvrA and 2 UvrB subunits scans DNA for abnormalities. Upon binding of the UvrA(2)B(2) complex to a putative damaged site, the DNA wraps around one UvrB monomer. DNA wrap is dependent on ATP binding by UvrB and probably causes local melting of the DNA helix, facilitating insertion of UvrB beta-hairpin between the DNA strands. Then UvrB probes one DNA strand for the presence of a lesion. If a lesion is found the UvrA subunits dissociate and the UvrB-DNA preincision complex is formed. This complex is subsequently bound by UvrC and the second UvrB is released. If no lesion is found, the DNA wraps around the other UvrB subunit that will check the other stand for damage. In Streptomyces coelicolor (strain ATCC BAA-471 / A3(2) / M145), this protein is UvrABC system protein B.